The primary structure comprises 129 residues: Sulfurtransferase TusD (129 aa).

Catalysis depends on Cys79, which acts as the Cysteine persulfide intermediate.

The protein belongs to the DsrE/TusD family. As to quaternary structure, heterohexamer, formed by a dimer of trimers. The hexameric TusBCD complex contains 2 copies each of TusB, TusC and TusD. The TusBCD complex interacts with TusE.

It is found in the cytoplasm. In terms of biological role, part of a sulfur-relay system required for 2-thiolation of 5-methylaminomethyl-2-thiouridine (mnm(5)s(2)U) at tRNA wobble positions. Accepts sulfur from TusA and transfers it in turn to TusE. The polypeptide is Sulfurtransferase TusD (Pectobacterium carotovorum subsp. carotovorum (strain PC1)).